The chain runs to 155 residues: Ribonuclease H (155 aa).

The RNase H type-1 domain maps to 1–142 (MLKQVEIFTD…CDELARAAAM (142 aa)). Mg(2+) contacts are provided by Asp10, Glu48, Asp70, and Asp134.

Belongs to the RNase H family. Monomer. The cofactor is Mg(2+).

It is found in the cytoplasm. The catalysed reaction is Endonucleolytic cleavage to 5'-phosphomonoester.. Its function is as follows. Endonuclease that specifically degrades the RNA of RNA-DNA hybrids. The protein is Ribonuclease H of Escherichia coli O127:H6 (strain E2348/69 / EPEC).